The primary structure comprises 93 residues: uncharacterized protein (93 aa).

The region spanning 1-76 is the Sm domain; the sequence is MDSHTTEKRR…IQTIEPDESM (76 aa).

As to quaternary structure, part of the core SMN complex at least composed of smn1, yip11/gem2, gem6, gem7 and gem8. Interacts with gem7; the interaction is direct.

Its function is as follows. The SMN complex catalyzes the assembly of small nuclear ribonucleoproteins (snRNPs), the building blocks of the spliceosome, and thereby plays an important role in the splicing of cellular pre-mRNAs. Most spliceosomal snRNPs contain a common set of Sm proteins smb1, smd1, smd2, smd3, sme1, smf1 and smg1 that assemble in a heptameric protein ring on the Sm site of the small nuclear RNA to form the core snRNP (Sm core). In the cytosol, the Sm proteins smd1, smd2, sme1, smf1 and smg1 (5Sm) are trapped in an inactive 6S pICln-Sm complex by the chaperone saf5. To complete assembly of core snRNPs, the SMN complex accepts 5Sm from saf5. Binding of snRNA inside 5Sm triggers eviction of the SMN complex, thereby allowing binding of smd3 and smb1 to complete assembly of the core snRNP. This is an uncharacterized protein from Schizosaccharomyces pombe (strain 972 / ATCC 24843) (Fission yeast).